A 521-amino-acid polypeptide reads, in one-letter code: Nitric oxide reductase transcription regulator NorR2 (521 aa).

Position 56 is a 4-aspartylphosphate (aspartate 56). One can recognise a Sigma-54 factor interaction domain in the interval 193–422; the sequence is IIGQSEAIAN…LEHVISRAAL (230 aa). ATP is bound by residues 221–228 and 293–302; these read GETGVGKE and EVGELPLAIQ. The segment at residues 497-516 is a DNA-binding region (H-T-H motif); that stretch reads WAQAARQLGIDASNLHKLAR.

It functions in the pathway nitrogen metabolism; nitrate reduction (denitrification) [regulation]. Functionally, required for the nitric oxide (NO) induced expression of NO reductase. Not required for expression of 2 other pathway members, nitrate reductase (nirS) and nitrous oxide reductase (nosZ). This chain is Nitric oxide reductase transcription regulator NorR2 (norR2), found in Cupriavidus necator (strain ATCC 17699 / DSM 428 / KCTC 22496 / NCIMB 10442 / H16 / Stanier 337) (Ralstonia eutropha).